The following is a 503-amino-acid chain: Major facilitator superfamily domain-containing protein 4A (503 aa).

12 helical membrane passes run 19–39, 53–73, 82–102, 105–125, 139–159, 214–234, 289–309, 338–358, 366–386, 392–412, 427–447, and 455–475; these read LTYW…GPTL, ITWV…LGGV, LFLL…IPFC, VGVL…IDTI, AIFL…SPLI, YAFW…FYLI, IWNA…TLFM, GYLP…SIPV, SMLF…LLSQ, MFVG…SMLA, VLVT…GSVM, and FLVC…VLLV. A disordered region spans residues 484–503; it reads SEDSACKPPGLDGEATSYQS.

The protein belongs to the major facilitator superfamily.

The protein resides in the membrane. In Xenopus tropicalis (Western clawed frog), this protein is Major facilitator superfamily domain-containing protein 4A (mfsd4a).